We begin with the raw amino-acid sequence, 336 residues long: Casein kinase II subunit alpha (336 aa).

Residues 32–317 form the Protein kinase domain; sequence YEVVRKIGRG…AKEAMAHPYF (286 aa). ATP-binding positions include 38–46 and Lys-61; that span reads IGRGKYSEV. Asp-149 acts as the Proton acceptor in catalysis.

Belongs to the protein kinase superfamily. Ser/Thr protein kinase family. CK2 subfamily. Tetramer composed of two alpha chains, one beta chain and one beta' chain.

It carries out the reaction L-seryl-[protein] + ATP = O-phospho-L-seryl-[protein] + ADP + H(+). It catalyses the reaction L-threonyl-[protein] + ATP = O-phospho-L-threonyl-[protein] + ADP + H(+). Functionally, catalytic subunit of a constitutively active serine/threonine-protein kinase complex that phosphorylates a large number of substrates containing acidic residues C-terminal to the phosphorylated serine or threonine. Phosphorylates the frq clock protein thus regulating the circadian clock. This is Casein kinase II subunit alpha (cka) from Neurospora crassa (strain ATCC 24698 / 74-OR23-1A / CBS 708.71 / DSM 1257 / FGSC 987).